Consider the following 279-residue polypeptide: Tryptophan prenyltransferase ComQ (279 aa).

Residues aspartate 67 and aspartate 71 each coordinate Mg(2+).

Belongs to the FPP/GGPP synthase family. Mg(2+) is required as a cofactor.

It localises to the cell membrane. It catalyses the reaction L-tryptophyl-[protein] + (2E)-geranyl diphosphate = (2S,3R)-3-geranyl-2,3-dihydro-2,N(alpha)-cyclo-L-tryptophyl-[protein] + diphosphate. Part of a major quorum-sensing system that regulates the development of genetic competence. Involved in the maturation of the competence pheromone ComX. Acts by catalyzing the transfer of a geranyl group on the ComX pheromone. Cannot use farnesyl diphosphate (FPP). The sequence is that of Tryptophan prenyltransferase ComQ from Bacillus spizizenii (Bacillus subtilis subsp. spizizenii).